A 242-amino-acid chain; its full sequence is MEWTDEGIVLGVRRHGEGNAIVELLTRLRGRHLGMVRGGASRRQAPLLQPGNTVSATWRARLDEHMGNYALEPAVVRTEVLMRAPHAAFGFTHMAQILHLLPERDPHEGLFLTVGAILDAFENRESAGRLLARFELALLAELGFGLELETCAATGRREDLVYVSPKSGRAVCGEAGAPYADRLFALPRFLVDGTAPPAGDVEDALRLTGYFLLTRVLEPRGLGLSDARAAFISAWRRSIAPA.

It belongs to the RecO family.

In terms of biological role, involved in DNA repair and RecF pathway recombination. The polypeptide is DNA repair protein RecO (Xanthobacter autotrophicus (strain ATCC BAA-1158 / Py2)).